Consider the following 249-residue polypeptide: MGGFADTGQVSVRIRWVITMRAGGVLVSPFDFLDLGDHVGDDPDCGGHLSRAWLVAAIGLGVDRVVWMSQVHGDRVKVVHEPCDAVVDNTDALVTRTSQPALPVVTIHCVPVLLSDARPGVTAAVHVGEGRGSARCASPCDGYDAGPGCVRWRRDIAVLLGPAVSGRNYEVPVVIADGVEAASPDSCTTTRISAGTPGLDLRTGIACQFRDLGVMSIEDDPRRTVADRALFSHLQTVSTGRLASLVWME.

Zn(2+)-binding residues include His72, Cys109, and His126.

The protein belongs to the purine nucleoside phosphorylase YfiH/LACC1 family. In terms of assembly, homodimer. Cu(2+) serves as cofactor. It depends on Zn(2+) as a cofactor.

The enzyme catalyses adenosine + phosphate = alpha-D-ribose 1-phosphate + adenine. It catalyses the reaction S-methyl-5'-thioadenosine + phosphate = 5-(methylsulfanyl)-alpha-D-ribose 1-phosphate + adenine. It carries out the reaction inosine + phosphate = alpha-D-ribose 1-phosphate + hypoxanthine. The catalysed reaction is adenosine + H2O + H(+) = inosine + NH4(+). In terms of biological role, purine nucleoside enzyme that catalyzes the phosphorolysis of adenosine and inosine nucleosides, yielding D-ribose 1-phosphate and the respective free bases, adenine and hypoxanthine. Also catalyzes the phosphorolysis of S-methyl-5'-thioadenosine into adenine and S-methyl-5-thio-alpha-D-ribose 1-phosphate. Also has adenosine deaminase activity. The chain is Purine nucleoside phosphorylase ML0918 from Mycobacterium leprae (strain TN).